The chain runs to 135 residues: MKNAGPSQRQLRVAEQVRHAVAHILQRGILLDDVLKDIVISVSEVRISPDLKIATCFVSPLSTLKNTSHTDVVNTLNKHSRFLRGEISHALRQMKYMPELRFRLDNSFDNFSKIDALLRSPEVARDLHHSDKDED.

It belongs to the RbfA family. Monomer. Binds 30S ribosomal subunits, but not 50S ribosomal subunits or 70S ribosomes.

The protein resides in the cytoplasm. Functionally, one of several proteins that assist in the late maturation steps of the functional core of the 30S ribosomal subunit. Associates with free 30S ribosomal subunits (but not with 30S subunits that are part of 70S ribosomes or polysomes). Required for efficient processing of 16S rRNA. May interact with the 5'-terminal helix region of 16S rRNA. The polypeptide is Ribosome-binding factor A (Bartonella tribocorum (strain CIP 105476 / IBS 506)).